Consider the following 334-residue polypeptide: Phosphate acyltransferase (334 aa).

It belongs to the PlsX family. As to quaternary structure, homodimer. Probably interacts with PlsY.

Its subcellular location is the cytoplasm. It catalyses the reaction a fatty acyl-[ACP] + phosphate = an acyl phosphate + holo-[ACP]. It functions in the pathway lipid metabolism; phospholipid metabolism. Its function is as follows. Catalyzes the reversible formation of acyl-phosphate (acyl-PO(4)) from acyl-[acyl-carrier-protein] (acyl-ACP). This enzyme utilizes acyl-ACP as fatty acyl donor, but not acyl-CoA. The chain is Phosphate acyltransferase from Desulfitobacterium hafniense (strain DSM 10664 / DCB-2).